The following is a 277-amino-acid chain: Digeranylgeranylglyceryl phosphate synthase (277 aa).

A run of 8 helical transmembrane segments spans residues leucine 16 to leucine 36, isoleucine 40 to phenylalanine 60, alanine 83 to tryptophan 105, phenylalanine 107 to leucine 124, glycine 146 to valine 166, valine 202 to isoleucine 222, leucine 224 to leucine 244, and glutamine 256 to valine 276.

Belongs to the UbiA prenyltransferase family. DGGGP synthase subfamily. The cofactor is Mg(2+).

The protein resides in the cell membrane. The catalysed reaction is sn-3-O-(geranylgeranyl)glycerol 1-phosphate + (2E,6E,10E)-geranylgeranyl diphosphate = 2,3-bis-O-(geranylgeranyl)-sn-glycerol 1-phosphate + diphosphate. Its pathway is membrane lipid metabolism; glycerophospholipid metabolism. Functionally, prenyltransferase that catalyzes the transfer of the geranylgeranyl moiety of geranylgeranyl diphosphate (GGPP) to the C2 hydroxyl of (S)-3-O-geranylgeranylglyceryl phosphate (GGGP). This reaction is the second ether-bond-formation step in the biosynthesis of archaeal membrane lipids. This chain is Digeranylgeranylglyceryl phosphate synthase, found in Thermococcus kodakarensis (strain ATCC BAA-918 / JCM 12380 / KOD1) (Pyrococcus kodakaraensis (strain KOD1)).